The sequence spans 367 residues: Tetraacyldisaccharide 4'-kinase (367 aa).

68–75 (VLGGSGKT) is an ATP binding site.

Belongs to the LpxK family.

It carries out the reaction a lipid A disaccharide + ATP = a lipid IVA + ADP + H(+). It functions in the pathway glycolipid biosynthesis; lipid IV(A) biosynthesis; lipid IV(A) from (3R)-3-hydroxytetradecanoyl-[acyl-carrier-protein] and UDP-N-acetyl-alpha-D-glucosamine: step 6/6. Functionally, transfers the gamma-phosphate of ATP to the 4'-position of a tetraacyldisaccharide 1-phosphate intermediate (termed DS-1-P) to form tetraacyldisaccharide 1,4'-bis-phosphate (lipid IVA). The sequence is that of Tetraacyldisaccharide 4'-kinase from Chlamydia caviae (strain ATCC VR-813 / DSM 19441 / 03DC25 / GPIC) (Chlamydophila caviae).